Reading from the N-terminus, the 370-residue chain is Protein TEEBE (370 aa).

Residues 1–21 (MSLYHSLSIFLLLSLCHGSYS) form the signal peptide. Asn-215 carries N-linked (GlcNAc...) asparagine glycosylation.

As to expression, expressed in primary and lateral roots, stigmatic papillae and hypocotyls.

Its subcellular location is the secreted. The protein resides in the cell wall. In terms of biological role, prevents hypocotyl epidermal cells elongation by modulating the pectin status in cell walls. Likely regulates pectin methylesterification degree during cell separation and elongation, including upon root-knot nematode Meloidogyne incognita infection. This is Protein TEEBE from Arabidopsis thaliana (Mouse-ear cress).